Reading from the N-terminus, the 567-residue chain is 2-succinyl-5-enolpyruvyl-6-hydroxy-3-cyclohexene-1-carboxylate synthase (567 aa).

The protein belongs to the TPP enzyme family. MenD subfamily. In terms of assembly, homodimer. Mg(2+) serves as cofactor. It depends on Mn(2+) as a cofactor. Thiamine diphosphate is required as a cofactor.

It carries out the reaction isochorismate + 2-oxoglutarate + H(+) = 5-enolpyruvoyl-6-hydroxy-2-succinyl-cyclohex-3-ene-1-carboxylate + CO2. It participates in quinol/quinone metabolism; 1,4-dihydroxy-2-naphthoate biosynthesis; 1,4-dihydroxy-2-naphthoate from chorismate: step 2/7. It functions in the pathway quinol/quinone metabolism; menaquinone biosynthesis. Its function is as follows. Catalyzes the thiamine diphosphate-dependent decarboxylation of 2-oxoglutarate and the subsequent addition of the resulting succinic semialdehyde-thiamine pyrophosphate anion to isochorismate to yield 2-succinyl-5-enolpyruvyl-6-hydroxy-3-cyclohexene-1-carboxylate (SEPHCHC). The sequence is that of 2-succinyl-5-enolpyruvyl-6-hydroxy-3-cyclohexene-1-carboxylate synthase from Shewanella loihica (strain ATCC BAA-1088 / PV-4).